Reading from the N-terminus, the 414-residue chain is Multifunctional CCA protein (414 aa).

ATP is bound by residues glycine 8 and arginine 11. Residues glycine 8 and arginine 11 each coordinate CTP. Mg(2+) is bound by residues glutamate 21 and aspartate 23. Positions 91, 137, and 140 each coordinate ATP. Arginine 91, arginine 137, and arginine 140 together coordinate CTP. The HD domain occupies 228-329; sequence TGIHTMMTVA…LKLFDAIDVW (102 aa).

Belongs to the tRNA nucleotidyltransferase/poly(A) polymerase family. Bacterial CCA-adding enzyme type 1 subfamily. In terms of assembly, monomer. Can also form homodimers and oligomers. It depends on Mg(2+) as a cofactor. Ni(2+) serves as cofactor.

The enzyme catalyses a tRNA precursor + 2 CTP + ATP = a tRNA with a 3' CCA end + 3 diphosphate. The catalysed reaction is a tRNA with a 3' CCA end + 2 CTP + ATP = a tRNA with a 3' CCACCA end + 3 diphosphate. Functionally, catalyzes the addition and repair of the essential 3'-terminal CCA sequence in tRNAs without using a nucleic acid template. Adds these three nucleotides in the order of C, C, and A to the tRNA nucleotide-73, using CTP and ATP as substrates and producing inorganic pyrophosphate. tRNA 3'-terminal CCA addition is required both for tRNA processing and repair. Also involved in tRNA surveillance by mediating tandem CCA addition to generate a CCACCA at the 3' terminus of unstable tRNAs. While stable tRNAs receive only 3'-terminal CCA, unstable tRNAs are marked with CCACCA and rapidly degraded. This Pectobacterium carotovorum subsp. carotovorum (strain PC1) protein is Multifunctional CCA protein.